A 348-amino-acid chain; its full sequence is Protein RecA (348 aa).

64 to 71 (GPESSGKT) provides a ligand contact to ATP.

This sequence belongs to the RecA family. Monomer; forms higher-order oligomers. Interacts with RecU. Interacts with DprA (smf). Interacts with RecD2.

The protein resides in the cytoplasm. It localises to the nucleoid. Functionally, multifunctional protein involved in homologous recombination, DNA repair and competence. Can catalyze the hydrolysis of (d)ATP in the presence of single-stranded (ss)DNA; prefers dATP at least in vitro, catalyzes the dATP-dependent uptake of ssDNA by duplex DNA, and the dATP-dependent hybridization of homologous ssDNA (strand exchange). RecA-ATP cannot catalyze homologous DNA strand exchange; SsbA and DprA activate strand exchange by RecA-ATP. It interacts with LexA causing its activation and leading to its autocatalytic cleavage. Hydrolysis of ATP in the presence of ssDNA is partially inhibited by RecU. Required for DNA transformation; protects transforming DNA from degradation, possibly in combination with DprA. Blocks replication of both leading and lagging strand DNA in the presence of RecO and SsbA; RecD2 is able to overcome this blockage. Its function is as follows. Recruited to repair centers (RCs), foci that are the site of double-stranded DNA break(s), after RecN. Concomitant with the appearance of RecO at the RCs, RecA forms threads that extend from RCs toward the opposite cell half, possibly searching for sequence homology along the sister chromosome. The threads disappear after about 2 hours. Thread formation is absolutely dependent on RecJ or AadAB. Thread formation is also dependent on RarA. This is Protein RecA from Bacillus subtilis (strain 168).